The sequence spans 811 residues: G-type lectin S-receptor-like serine/threonine-protein kinase LECRK3 (811 aa).

The first 23 residues, 1 to 23 (MAHLLFLPILQLLLLYCTKSAQA), serve as a signal peptide directing secretion. In terms of domain architecture, Bulb-type lectin spans 24–153 (QLNISIGSSL…DGATKWESFG (130 aa)). Topologically, residues 24 to 464 (QLNISIGSSL…DKKYWILGSS (441 aa)) are extracellular. Asparagine 26, asparagine 39, asparagine 59, asparagine 219, asparagine 226, asparagine 237, and asparagine 242 each carry an N-linked (GlcNAc...) asparagine glycan. The EGF-like; atypical domain maps to 292 to 344 (PENICQSIQTMVGSGACGFNSYCTIDGTKNTTSCLCPQNYKFIDDKRKYKGCR). 5 cysteine pairs are disulfide-bonded: cysteine 296-cysteine 314, cysteine 308-cysteine 325, cysteine 327-cysteine 343, cysteine 389-cysteine 411, and cysteine 393-cysteine 399. Asparagine 321 carries an N-linked (GlcNAc...) asparagine glycan. In terms of domain architecture, PAN spans 352-430 (CDLDETTAML…GKMDVNVPRT (79 aa)). The helical transmembrane segment at 465–485 (LLFGSSVLVNFLLISVMLFGT) threads the bilayer. The Cytoplasmic portion of the chain corresponds to 486–811 (YCSITSRKKI…DPSSYISSLA (326 aa)). Positions 521-795 (GGFQEVLGTG…KVTQMLDGAV (275 aa)) constitute a Protein kinase domain. Residues 527-535 (LGTGASGVV) and lysine 551 each bind ATP. Aspartate 645 acts as the Proton acceptor in catalysis.

The protein belongs to the protein kinase superfamily. Ser/Thr protein kinase family.

It is found in the membrane. The catalysed reaction is L-seryl-[protein] + ATP = O-phospho-L-seryl-[protein] + ADP + H(+). It catalyses the reaction L-threonyl-[protein] + ATP = O-phospho-L-threonyl-[protein] + ADP + H(+). Involved in resistance against the herbivorous insect brown planthopper (N.lugens, BPH). Member of the BPH3 (BPH resistance locus 3) cluster which contains LECRK1, LECRK2 and LECRK3. This Oryza sativa subsp. indica (Rice) protein is G-type lectin S-receptor-like serine/threonine-protein kinase LECRK3.